The sequence spans 2171 residues: Mediator of DNA damage checkpoint protein 1 (2171 aa).

The span at 1–19 (MEDTQAIDWDVEEEEETEQ) shows a compositional bias: acidic residues. A disordered region spans residues 1 to 22 (MEDTQAIDWDVEEEEETEQSSE). An interaction with CHEK2 region spans residues 1–150 (MEDTQAIDWD…SRGPLTVEET (150 aa)). Residues 2–220 (EDTQAIDWDV…PFAFNLNSDT (219 aa)) are interaction with the MRN complex. Thr-4 is subject to Phosphothreonine. Residues 54 to 105 (NVVGRMPDCSVALPFPSISKQHAEIEILAWDKAPILRDCGSLNGTQILRPPK) enclose the FHA domain. The residue at position 108 (Ser-108) is a Phosphoserine. The required for nuclear localization (NLS1) stretch occupies residues 145–568 (LTVEETPRVQ…PAKLLVVSLE (424 aa)). Phosphothreonine is present on Thr-146. Residues Ser-168, Ser-176, Ser-196, and Ser-218 each carry the phosphoserine modification. 2 disordered regions span residues 185-248 (RTTS…AKQS) and 261-317 (DQPL…AEVH). Position 220 is a phosphothreonine (Thr-220). Basic and acidic residues predominate over residues 261–278 (DQPLVKERDDDTKVKRGA). At Ser-299 the chain carries Phosphoserine. Thr-301 bears the Phosphothreonine mark. Positions 306 to 317 (DSRPPGRPAEVH) are enriched in basic and acidic residues. Phosphoserine is present on Ser-329. Position 331 is a phosphothreonine (Thr-331). A disordered region spans residues 355 to 387 (GVGTRGPGAPGLAHLQESQAGSDTDVEEGKAPQ). Ser-372 and Ser-376 each carry phosphoserine. Thr-378 carries the post-translational modification Phosphothreonine. Ser-394, Ser-397, and Ser-402 each carry phosphoserine. Thr-404 is subject to Phosphothreonine. Phosphoserine is present on Ser-411. Disordered stretches follow at residues 443–469 (QRSQTTTERDSDTDVEEEELPVENREA) and 481–522 (VRAH…VDIN). Position 449 is a phosphothreonine (Thr-449). Phosphoserine is present on Ser-453. The residue at position 455 (Thr-455) is a Phosphothreonine. Phosphoserine occurs at positions 485, 495, 498, 504, 505, and 513. Residues 513 to 522 (SQASTTVDIN) are compositionally biased toward polar residues. Thr-523 bears the Phosphothreonine mark. Position 590 is a phosphoserine (Ser-590). Lys-616 participates in a covalent cross-link: Glycyl lysine isopeptide (Lys-Gly) (interchain with G-Cter in SUMO1); alternate. A Glycyl lysine isopeptide (Lys-Gly) (interchain with G-Cter in SUMO2); alternate cross-link involves residue Lys-616. Disordered stretches follow at residues 653 to 689 (DTLGESTQPQREGAQVPTGREREQHVGGTKDSEDNYG) and 780 to 1969 (SPPR…TKLN). Residues 671 to 685 (GREREQHVGGTKDSE) are compositionally biased toward basic and acidic residues. Residues Ser-780 and Ser-793 each carry the phosphoserine modification. The residue at position 812 (Lys-812) is an N6-acetyllysine. 4 stretches are compositionally biased toward basic and acidic residues: residues 819-844 (ETAERVGPERGPLERETEKLLPERQT), 851-862 (ELTKGKQDREQK), 868-905 (DTQRQESDKNGESASPERDRESLKVEIETSEEIQEKQV), and 914-951 (AFEREVERPVANRECDPAELEEKVPKVILERDTQRGEP). Residues Ser-955 and Ser-998 each carry the phosphoserine modification. Residues 955–964 (SQDQKGQASS) are compositionally biased toward polar residues. Basic and acidic residues predominate over residues 1016 to 1031 (KASRIRAAEKVSRGDQ). Ser-1033 is modified (phosphoserine). Pro residues predominate over residues 1040 to 1051 (PTVPEAPAPPQK). A phosphoserine mark is found at Ser-1068 and Ser-1086. Basic residues predominate over residues 1103 to 1113 (PKPKIRTRKSS). Polar residues-rich tracts occupy residues 1129–1157 (PSTSTAQPVTPKPTSQATRSRTNRSSVKT) and 1170–1187 (PCTSTDQPVTSEPTSQVT). Positions 1148–1692 (SRTNRSSVKT…TNRSSVKTPE (545 aa)) are interaction with the PRKDC complex. Thr-1157 carries the post-translational modification Phosphothreonine. Thr-1198 is modified (phosphothreonine). A compositionally biased stretch (polar residues) spans 1210-1227 (QPSTSTDRPVTSEPTSHA). Ser-1235 is modified (phosphoserine). Phosphothreonine is present on Thr-1239. Polar residues predominate over residues 1251–1268 (QPSTSTDQPVTSEPTYQA). 2 positions are modified to phosphothreonine: Thr-1280 and Thr-1302. Over residues 1306–1318 (TSRTTRSRTNMSS) the composition is skewed to low complexity. 2 stretches are compositionally biased toward polar residues: residues 1334–1350 (PSTSTEQPVTPEPTSRA) and 1375–1403 (PSTSTDQPVTPEPTSQATRGRTNRSSVKT). Residues 1429 to 1441 (TSRTTRSRTNMSS) are compositionally biased toward low complexity. A compositionally biased stretch (polar residues) spans 1457–1473 (PSTSTEQPVTPEPTSRA). Phosphoserine is present on residues Ser-1481 and Ser-1482. Lys-1484 is subject to N6-acetyllysine. A Phosphothreonine modification is found at Thr-1485. Residue Lys-1495 forms a Glycyl lysine isopeptide (Lys-Gly) (interchain with G-Cter in SUMO1); alternate linkage. Lys-1495 is covalently cross-linked (Glycyl lysine isopeptide (Lys-Gly) (interchain with G-Cter in SUMO2); alternate). Composition is skewed to polar residues over residues 1498-1526 (PSTSTDQPVTPEPTSQATRGRTNRSSVKT), 1538-1557 (QPSTSTDQPVTPEPTSQVTR), and 1580-1596 (ASASTDQPVTSEPTSRT). Phosphothreonine occurs at positions 1507 and 1548. Phosphothreonine is present on residues Thr-1615 and Thr-1630. Composition is skewed to polar residues over residues 1620-1649 (QPSTSTDQPVTPEPTSQATRGRTNRSSVKT) and 1661-1678 (QPSTSRNQLVTPEPTSRA). The residue at position 1646 (Ser-1646) is a Phosphoserine. Residues Thr-1649 and Thr-1671 each carry the phosphothreonine modification. Ser-1686 is subject to Phosphoserine. Thr-1690 is subject to Phosphothreonine. A compositionally biased stretch (pro residues) spans 1693–1702 (PVVPTAPEPH). Polar residues predominate over residues 1706–1718 (STDQPVTPKLTSR). A phosphothreonine mark is found at Thr-1712, Thr-1746, and Thr-1753. The span at 1760-1771 (GGQSKTLRSSTV) shows a compositional bias: polar residues. Ser-1763 is modified (phosphoserine). Thr-1779 carries the post-translational modification Phosphothreonine. A compositionally biased stretch (polar residues) spans 1780–1801 (PEFQSPVTTDQPISPEPITQPS). The interval 1780–2171 (PEFQSPVTTD…VLSPLEMSST (392 aa)) is required for nuclear localization (NLS2). 2 positions are modified to phosphoserine: Ser-1784 and Ser-1793. Lys-1822 is covalently cross-linked (Glycyl lysine isopeptide (Lys-Gly) (interchain with G-Cter in SUMO2)). Ser-1857 is modified (phosphoserine). Lys-1872 participates in a covalent cross-link: Glycyl lysine isopeptide (Lys-Gly) (interchain with G-Cter in SUMO2). At Thr-1882 the chain carries Phosphothreonine. The residue at position 1902 (Ser-1902) is a Phosphoserine. A compositionally biased stretch (polar residues) spans 1905–1918 (HQKQPQRGEVSQKT). Lys-1922 participates in a covalent cross-link: Glycyl lysine isopeptide (Lys-Gly) (interchain with G-Cter in SUMO1); alternate. A Glycyl lysine isopeptide (Lys-Gly) (interchain with G-Cter in SUMO2); alternate cross-link involves residue Lys-1922. Positions 1929 to 1939 (AEKPGKEEDVV) are enriched in basic and acidic residues. Thr-1940 carries the post-translational modification Phosphothreonine. BRCT domains lie at 1974–2052 (APKV…EYVV) and 2073–2164 (RERR…FVLS). Arg-2025 bears the Omega-N-methylarginine mark.

Homodimer. Interacts with H2AX, which requires phosphorylation of H2AX on 'Ser-139'. Interacts with the MRN complex, composed of MRE11, RAD50, and NBN. Interacts with CHEK2, which requires ATM-mediated phosphorylation of 'Thr-68' within the FHA domain of CHEK2. Interacts constitutively with the BRCA1-BARD1 complex, SMC1A and TP53BP1. Interacts with ATM and FANCD2, and these interactions are reduced upon DNA damage. Also interacts with the PRKDC complex, composed of XRCC6/KU70, XRCC5/KU80 and PRKDC/XRCC7. This interaction may be required for PRKDC autophosphorylation, which is essential for DNA double strand break (DSB) repair. When phosphorylated by ATM, interacts with RNF8 (via FHA domain). Interacts with CEP164. When phosphorylated, interacts with APTX (via FHA-like domain). Interacts (when phosphorylated) with TOPBP1; promoting TOPBP1 localization to DNA damage sites during mitosis. Interacts (when phosphorylated) with NBN; promoting NBN and MRN complex localization to DNA damage sites. Post-translationally, phosphorylated upon exposure to ionizing radiation (IR), ultraviolet radiation (UV), and hydroxyurea (HU). Phosphorylation in response to IR requires ATM, NBN, and possibly CHEK2. Also phosphorylated during the G2/M phase of the cell cycle and during activation of the mitotic spindle checkpoint. Phosphorylation at Thr-4 by ATM stabilizes and enhances homodimerization via the FHA domain. Phosphorylated at Ser-168 and Ser-196 by CK2 in response to DNA damage during mitosis, promoting interaction with TOPBP1. Phosphorylated by CK2 in response to DNA damage, promoting interaction with NBN and recruitment of the MRN complex to DNA damage sites. In terms of processing, sumoylation at Lys-1922 by PIAS4 following DNA damage promotes ubiquitin-mediated degradation. Ubiquitinated by RNF4, leading to proteasomal degradation; undergoes 'Lys-48'-linked polyubiquitination.

The protein resides in the nucleus. It localises to the chromosome. Histone reader protein required for checkpoint-mediated cell cycle arrest in response to DNA damage within both the S phase and G2/M phases of the cell cycle. Specifically recognizes and binds histone H2AX phosphorylated at 'Ser-139', a marker of DNA damage, serving as a scaffold for the recruitment of DNA repair and signal transduction proteins to discrete foci of DNA damage sites. Also required for downstream events subsequent to the recruitment of these proteins. These include phosphorylation and activation of the ATM, CHEK1 and CHEK2 kinases, and stabilization of TP53/p53 and apoptosis. ATM and CHEK2 may also be activated independently by a parallel pathway mediated by TP53BP1. Required for chromosomal stability during mitosis by promoting recruitment of TOPBP1 to DNA double strand breaks (DSBs): TOPBP1 forms filamentous assemblies that bridge MDC1 and tether broken chromosomes during mitosis. Required for the repair of DSBs via homologous recombination by promoting recruitment of NBN component of the MRN complex to DSBs. The protein is Mediator of DNA damage checkpoint protein 1 (MDC1) of Pan troglodytes (Chimpanzee).